We begin with the raw amino-acid sequence, 220 residues long: MTKKEIAKFIDHTFLKSNATHADIKKLCDEALKYSFASVCVNPYYVKVCKEYLKDSPVKVATVVGFPLGATSMKTKIFEAKEAFEDGADEIDMVINIGALLEGNVDYVYEEIKNIVDIARGYKNKIVKVIIETSELSDQQKIEACKIVMDAGADFVKTSTGFSKSGAKYEDILLMRKVVGDKIKIKASGGIRTYEDALEMIEAGASRIGTSSGVAIVSED.

Catalysis depends on aspartate 92, which acts as the Proton donor/acceptor. Lysine 157 serves as the catalytic Schiff-base intermediate with acetaldehyde. Lysine 186 serves as the catalytic Proton donor/acceptor.

This sequence belongs to the DeoC/FbaB aldolase family. DeoC type 1 subfamily.

It localises to the cytoplasm. The enzyme catalyses 2-deoxy-D-ribose 5-phosphate = D-glyceraldehyde 3-phosphate + acetaldehyde. It participates in carbohydrate degradation; 2-deoxy-D-ribose 1-phosphate degradation; D-glyceraldehyde 3-phosphate and acetaldehyde from 2-deoxy-alpha-D-ribose 1-phosphate: step 2/2. Catalyzes a reversible aldol reaction between acetaldehyde and D-glyceraldehyde 3-phosphate to generate 2-deoxy-D-ribose 5-phosphate. This Caldicellulosiruptor saccharolyticus (strain ATCC 43494 / DSM 8903 / Tp8T 6331) protein is Deoxyribose-phosphate aldolase.